Reading from the N-terminus, the 534-residue chain is Calcium uptake protein 1 homolog, mitochondrial (534 aa).

The transit peptide at 1–32 (MLHCSFLRVIPIKNASKRLIIVRSLTSAPAKT) directs the protein to the mitochondrion. The interval 131-150 (PEASQKEEVTESNGEVEEVK) is disordered. 3 consecutive EF-hand domains span residues 271–306 (TSHA…IMSQ), 338–359 (KDGK…LQHD), and 466–501 (LSDH…RMRR). Asp284, Asp286, Asn288, and Glu295 together coordinate Ca(2+).

It belongs to the MICU1 family. MICU1 subfamily. As to expression, expressed at low levels in PLM touch receptor neurons, germ cells, epidermis, and muscles.

The protein resides in the mitochondrion intermembrane space. The protein localises to the mitochondrion inner membrane. In terms of biological role, calcium sensor of the mitochondrial calcium uniporter (mcu-1) channel, which senses calcium level via its EF-hand domains. At low calcium levels, micu-1 occludes the pore of the mcu-1 channel, preventing mitochondrial calcium uptake. At higher calcium levels, calcium-binding to micu-1 induces a conformational change that weakens mcu-1-micu-1 interactions and moves micu-1 away from the pore, allowing calcium permeation through the mcu-1 channel. Also required to protect against manganese toxicity by preventing manganese uptake by mcu-1. Modulates the activity of the mitochondrial calcium uniporter protein mcu-1 depending on the level of intracellular calcium in PLM touch receptor neurons following axonal injury. The chain is Calcium uptake protein 1 homolog, mitochondrial from Caenorhabditis elegans.